Reading from the N-terminus, the 400-residue chain is Glycerol-3-phosphate dehydrogenase [NAD(+)] 1, chloroplastic (400 aa).

The transit peptide at 1-32 directs the protein to the chloroplast; the sequence is MRFRSFFFSSSIFSLSHSRSPSLSSSRFSSLS. NAD(+) is bound by residues 61 to 66, Phe92, Phe149, Lys172, and Ala205; that span reads GSGNWG. Lys172 is a substrate binding site. The Proton acceptor role is filled by Lys257. Residues Arg321, Lys350, and Gln352 each coordinate NAD(+). 321-322 contacts substrate; that stretch reads RN.

This sequence belongs to the NAD-dependent glycerol-3-phosphate dehydrogenase family. As to expression, expressed in young seedlings, flowers and siliques. Expressed at low levels in roots.

The protein localises to the plastid. It localises to the chloroplast. It carries out the reaction sn-glycerol 3-phosphate + NAD(+) = dihydroxyacetone phosphate + NADH + H(+). The protein operates within membrane lipid metabolism; glycerophospholipid metabolism. Functionally, involved in glycerolipid metabolism. This is Glycerol-3-phosphate dehydrogenase [NAD(+)] 1, chloroplastic (DHAPRD) from Arabidopsis thaliana (Mouse-ear cress).